A 433-amino-acid polypeptide reads, in one-letter code: Acetyl-CoA-benzylalcohol acetyltransferase (433 aa).

Residues His152 and Asp377 each act as proton acceptor in the active site.

The protein belongs to the plant acyltransferase family.

The catalysed reaction is benzyl alcohol + acetyl-CoA = benzyl acetate + CoA. It catalyses the reaction (E)-cinnamyl alcohol + acetyl-CoA = (E)-cinnamyl acetate + CoA. Its function is as follows. Involved in the biosynthesis of benzyl acetate, a major constituent of the floral scent. Can use benzylalcohol, cinnamylalcohol, 3-cis-hexene-1-ol or heptanol as substrates. Has some activity with 2-phenylethanol and 2-naphtalene-ethanol. The protein is Acetyl-CoA-benzylalcohol acetyltransferase (BEAT) of Clarkia breweri (Fairy fans).